Here is a 271-residue protein sequence, read N- to C-terminus: Formamidopyrimidine-DNA glycosylase (271 aa).

Catalysis depends on Pro-2, which acts as the Schiff-base intermediate with DNA. Glu-3 acts as the Proton donor in catalysis. Catalysis depends on Lys-57, which acts as the Proton donor; for beta-elimination activity. DNA-binding residues include His-90, Arg-109, and Lys-151. The segment at 236-270 (HVYGRGGESCTQCGNLLSEIKLGQRATVFCGLCQT) adopts an FPG-type zinc-finger fold. Arg-260 functions as the Proton donor; for delta-elimination activity in the catalytic mechanism.

This sequence belongs to the FPG family. In terms of assembly, monomer. Requires Zn(2+) as cofactor.

The enzyme catalyses Hydrolysis of DNA containing ring-opened 7-methylguanine residues, releasing 2,6-diamino-4-hydroxy-5-(N-methyl)formamidopyrimidine.. It carries out the reaction 2'-deoxyribonucleotide-(2'-deoxyribose 5'-phosphate)-2'-deoxyribonucleotide-DNA = a 3'-end 2'-deoxyribonucleotide-(2,3-dehydro-2,3-deoxyribose 5'-phosphate)-DNA + a 5'-end 5'-phospho-2'-deoxyribonucleoside-DNA + H(+). Functionally, involved in base excision repair of DNA damaged by oxidation or by mutagenic agents. Acts as a DNA glycosylase that recognizes and removes damaged bases. Has a preference for oxidized purines, such as 7,8-dihydro-8-oxoguanine (8-oxoG). Has AP (apurinic/apyrimidinic) lyase activity and introduces nicks in the DNA strand. Cleaves the DNA backbone by beta-delta elimination to generate a single-strand break at the site of the removed base with both 3'- and 5'-phosphates. This is Formamidopyrimidine-DNA glycosylase from Shewanella woodyi (strain ATCC 51908 / MS32).